A 122-amino-acid chain; its full sequence is Large ribosomal subunit protein bL12 (122 aa).

The protein belongs to the bacterial ribosomal protein bL12 family. Homodimer. Part of the ribosomal stalk of the 50S ribosomal subunit. Forms a multimeric L10(L12)X complex, where L10 forms an elongated spine to which 2 to 4 L12 dimers bind in a sequential fashion. Binds GTP-bound translation factors.

Its function is as follows. Forms part of the ribosomal stalk which helps the ribosome interact with GTP-bound translation factors. Is thus essential for accurate translation. This is Large ribosomal subunit protein bL12 from Staphylococcus saprophyticus subsp. saprophyticus (strain ATCC 15305 / DSM 20229 / NCIMB 8711 / NCTC 7292 / S-41).